The sequence spans 220 residues: Probable septum site-determining protein MinC (220 aa).

It belongs to the MinC family. In terms of assembly, interacts with MinD and FtsZ.

Functionally, cell division inhibitor that blocks the formation of polar Z ring septums. Rapidly oscillates between the poles of the cell to destabilize FtsZ filaments that have formed before they mature into polar Z rings. Prevents FtsZ polymerization. In Vibrio vulnificus (strain CMCP6), this protein is Probable septum site-determining protein MinC.